A 232-amino-acid chain; its full sequence is Large ribosomal subunit protein uL1 (232 aa).

This sequence belongs to the universal ribosomal protein uL1 family. In terms of assembly, part of the 50S ribosomal subunit.

Functionally, binds directly to 23S rRNA. The L1 stalk is quite mobile in the ribosome, and is involved in E site tRNA release. In terms of biological role, protein L1 is also a translational repressor protein, it controls the translation of the L11 operon by binding to its mRNA. The polypeptide is Large ribosomal subunit protein uL1 (Paraburkholderia xenovorans (strain LB400)).